The primary structure comprises 469 residues: UDP-N-acetylmuramoylalanine--D-glutamate ligase (469 aa).

125–131 provides a ligand contact to ATP; sequence GTNGKTT.

Belongs to the MurCDEF family.

Its subcellular location is the cytoplasm. The catalysed reaction is UDP-N-acetyl-alpha-D-muramoyl-L-alanine + D-glutamate + ATP = UDP-N-acetyl-alpha-D-muramoyl-L-alanyl-D-glutamate + ADP + phosphate + H(+). It participates in cell wall biogenesis; peptidoglycan biosynthesis. Cell wall formation. Catalyzes the addition of glutamate to the nucleotide precursor UDP-N-acetylmuramoyl-L-alanine (UMA). In Prochlorococcus marinus (strain NATL2A), this protein is UDP-N-acetylmuramoylalanine--D-glutamate ligase.